The chain runs to 367 residues: CCCH-type zinc finger protein moe-3 (367 aa).

Residues 1 to 15 (MSKVKGDLEKSDKRP) show a composition bias toward basic and acidic residues. A disordered region spans residues 1-57 (MSKVKGDLEKSDKRPPSSMSTGSADSGVFSSGVHASSPSHSQGSSSQSGPPSPTTQL). Residues 30-49 (SSGVHASSPSHSQGSSSQSG) are compositionally biased toward low complexity. A coiled-coil region spans residues 63 to 92 (ETANLIAVNEQLRKEIAENKQIQTNQMRAL). A disordered region spans residues 107-126 (SISPHHGFPQRPPRGERRMQ). 2 consecutive C3H1-type zinc fingers follow at residues 130–158 (SYKT…HGEE) and 172–200 (KYKT…HPDN). The segment at 235–268 (NTRNSYNQQPPPMGGLEMQSSPMKSSSDSSHMRS) is disordered. Positions 252-268 (MQSSPMKSSSDSSHMRS) are enriched in low complexity.

Exclusively expressed in the hermaphrodite gonad. Weakly distributed throughout gonadal oocytes from the mitotic stage to the developing diakinesis stage, with expression restricted to the distal region of the gonad.

In terms of biological role, zinc-finger protein that may play a role in oocyte maturation and fertility. The protein is CCCH-type zinc finger protein moe-3 of Caenorhabditis elegans.